An 846-amino-acid polypeptide reads, in one-letter code: Leucine--tRNA ligase (846 aa).

The 'HIGH' region signature appears at 42 to 52; sequence PYPSGNLHMGH. The 'KMSKS' region motif lies at 586–590; it reads KMSKS. An ATP-binding site is contributed by Lys589.

The protein belongs to the class-I aminoacyl-tRNA synthetase family.

It is found in the cytoplasm. It catalyses the reaction tRNA(Leu) + L-leucine + ATP = L-leucyl-tRNA(Leu) + AMP + diphosphate. This chain is Leucine--tRNA ligase, found in Heliobacterium modesticaldum (strain ATCC 51547 / Ice1).